We begin with the raw amino-acid sequence, 1230 residues long: ATP-dependent helicase/nuclease subunit A (1230 aa).

A UvrD-like helicase ATP-binding domain is found at 9–480; it reads STWTDDQWKA…IDLNKNFRSR (472 aa). Residue 30–37 coordinates ATP; that stretch reads AAAGSGKT. One can recognise a UvrD-like helicase C-terminal domain in the interval 507-796; the sequence is QAELKLGASY…RLMTIHSSKG (290 aa).

Belongs to the helicase family. AddA subfamily. Heterodimer of AddA and AddB/RexB. Requires Mg(2+) as cofactor.

It carries out the reaction Couples ATP hydrolysis with the unwinding of duplex DNA by translocating in the 3'-5' direction.. It catalyses the reaction ATP + H2O = ADP + phosphate + H(+). Functionally, the heterodimer acts as both an ATP-dependent DNA helicase and an ATP-dependent, dual-direction single-stranded exonuclease. Recognizes the chi site generating a DNA molecule suitable for the initiation of homologous recombination. The AddA nuclease domain is required for chi fragment generation; this subunit has the helicase and 3' -&gt; 5' nuclease activities. This Bacillus licheniformis (strain ATCC 14580 / DSM 13 / JCM 2505 / CCUG 7422 / NBRC 12200 / NCIMB 9375 / NCTC 10341 / NRRL NRS-1264 / Gibson 46) protein is ATP-dependent helicase/nuclease subunit A.